Consider the following 213-residue polypeptide: Phosphatidylserine decarboxylase proenzyme (213 aa).

The active-site Schiff-base intermediate with substrate; via pyruvic acid is the Ser182. Ser182 bears the Pyruvic acid (Ser); by autocatalysis mark.

The protein belongs to the phosphatidylserine decarboxylase family. PSD-A subfamily. In terms of assembly, heterodimer of a large membrane-associated beta subunit and a small pyruvoyl-containing alpha subunit. The cofactor is pyruvate. Post-translationally, is synthesized initially as an inactive proenzyme. Formation of the active enzyme involves a self-maturation process in which the active site pyruvoyl group is generated from an internal serine residue via an autocatalytic post-translational modification. Two non-identical subunits are generated from the proenzyme in this reaction, and the pyruvate is formed at the N-terminus of the alpha chain, which is derived from the carboxyl end of the proenzyme. The post-translation cleavage follows an unusual pathway, termed non-hydrolytic serinolysis, in which the side chain hydroxyl group of the serine supplies its oxygen atom to form the C-terminus of the beta chain, while the remainder of the serine residue undergoes an oxidative deamination to produce ammonia and the pyruvoyl prosthetic group on the alpha chain.

It is found in the cell membrane. The catalysed reaction is a 1,2-diacyl-sn-glycero-3-phospho-L-serine + H(+) = a 1,2-diacyl-sn-glycero-3-phosphoethanolamine + CO2. It participates in phospholipid metabolism; phosphatidylethanolamine biosynthesis; phosphatidylethanolamine from CDP-diacylglycerol: step 2/2. Its function is as follows. Catalyzes the formation of phosphatidylethanolamine (PtdEtn) from phosphatidylserine (PtdSer). The chain is Phosphatidylserine decarboxylase proenzyme from Geotalea daltonii (strain DSM 22248 / JCM 15807 / FRC-32) (Geobacter daltonii).